Reading from the N-terminus, the 478-residue chain is NADH oxidase (478 aa).

FAD contacts are provided by residues 8-12 (GINHA), Asp33, Cys43, Val80, 111-114 (ASGA), Lys149, and Tyr177. The Proton acceptor role is filled by His11. The Redox-active role is filled by Cys43. Residue Cys43 is modified to Cysteine sulfinic acid (-SO2H). NAD(+)-binding positions include 170 to 185 (VAIVGSGYIGLELAEA), Asp197, and Gly264. FAD-binding positions include 295-305 (LNHKDVYVIGG), Leu322, Ala323, and Thr324. Ala353 is an NAD(+) binding site. Position 450 (Phe450) interacts with FAD.

The protein belongs to the class-III pyridine nucleotide-disulfide oxidoreductase family. FAD serves as cofactor.

The enzyme catalyses 2 NADH + O2 + 2 H(+) = 2 NAD(+) + 2 H2O. Functionally, catalyzes the four-electron reduction of molecular oxygen to water. This chain is NADH oxidase (nox), found in Mycoplasma genitalium (strain ATCC 33530 / DSM 19775 / NCTC 10195 / G37) (Mycoplasmoides genitalium).